The chain runs to 171 residues: Co-chaperone protein HscB (171 aa).

Residues 2-74 (DYFTLFGLPA…LTRAEYLLSL (73 aa)) form the J domain.

The protein belongs to the HscB family. As to quaternary structure, interacts with HscA and stimulates its ATPase activity. Interacts with IscU.

In terms of biological role, co-chaperone involved in the maturation of iron-sulfur cluster-containing proteins. Seems to help targeting proteins to be folded toward HscA. The polypeptide is Co-chaperone protein HscB (Citrobacter koseri (strain ATCC BAA-895 / CDC 4225-83 / SGSC4696)).